Reading from the N-terminus, the 316-residue chain is tRNA uridine(34) hydroxylase (316 aa).

The 95-residue stretch at 136-230 folds into the Rhodanese domain; sequence ADENTVVVDK…YLEEVPREQS (95 aa). Cys-190 acts as the Cysteine persulfide intermediate in catalysis.

It belongs to the TrhO family.

The catalysed reaction is uridine(34) in tRNA + AH2 + O2 = 5-hydroxyuridine(34) in tRNA + A + H2O. In terms of biological role, catalyzes oxygen-dependent 5-hydroxyuridine (ho5U) modification at position 34 in tRNAs. The polypeptide is tRNA uridine(34) hydroxylase (Brucella abortus (strain 2308)).